The sequence spans 413 residues: NAD(P)H oxidoreductase RTN4IP1, mitochondrial (413 aa).

The N-terminal 23 residues, methionine 1–tyrosine 23, are a transit peptide targeting the mitochondrion. The interval alanine 27 to methionine 52 is disordered. Positions leucine 31–alanine 40 are enriched in polar residues. Positions glycine 61–valine 405 constitute an Enoyl reductase (ER) domain. The NADPH site is built by serine 228, glycine 230, valine 231, serine 251, tyrosine 269, glycine 353, phenylalanine 355, histidine 398, and arginine 400.

The protein belongs to the zinc-containing alcohol dehydrogenase family. Quinone oxidoreductase subfamily.

It is found in the mitochondrion matrix. The catalysed reaction is a quinone + NADH + H(+) = a quinol + NAD(+). The enzyme catalyses a quinone + NADPH + H(+) = a quinol + NADP(+). The protein operates within cofactor biosynthesis; ubiquinone biosynthesis. NAD(P)H oxidoreductase. Involved in the ubiquinone biosynthetic pathway. The polypeptide is NAD(P)H oxidoreductase RTN4IP1, mitochondrial (Drosophila melanogaster (Fruit fly)).